Here is a 694-residue protein sequence, read N- to C-terminus: Elongation factor G (694 aa).

The region spanning 9-288 (DAIRNIGIMA…VIVKWLPSPL (280 aa)) is the tr-type G domain. GTP is bound by residues 18-25 (AHIDAGKT), 82-86 (DTPGH), and 136-139 (NKMD).

The protein belongs to the TRAFAC class translation factor GTPase superfamily. Classic translation factor GTPase family. EF-G/EF-2 subfamily.

It localises to the cytoplasm. Its function is as follows. Catalyzes the GTP-dependent ribosomal translocation step during translation elongation. During this step, the ribosome changes from the pre-translocational (PRE) to the post-translocational (POST) state as the newly formed A-site-bound peptidyl-tRNA and P-site-bound deacylated tRNA move to the P and E sites, respectively. Catalyzes the coordinated movement of the two tRNA molecules, the mRNA and conformational changes in the ribosome. This is Elongation factor G (fusA) from Chlamydia muridarum (strain MoPn / Nigg).